We begin with the raw amino-acid sequence, 591 residues long: Laccase (591 aa).

The signal sequence occupies residues 1–20; that stretch reads MPSFFRALFSGLIASQLSWA. Plastocyanin-like domains lie at 66–189 and 198–356; these read VRQY…IQID and IDLG…HPTN. Asn121 is a glycosylation site (N-linked (GlcNAc...) asparagine). Cu cation is bound by residues His126, His128, His171, and His173. Cystine bridges form between Cys147–Cys571 and Cys332–Cys366. Residues Asn234, Asn242, Asn265, and Asn323 are each glycosylated (N-linked (GlcNAc...) asparagine). N-linked (GlcNAc...) asparagine glycosylation is found at Asn407 and Asn425. Positions 416 to 551 constitute a Plastocyanin-like 3 domain; sequence GHPITQYVIN…AGLGNTFLEQ (136 aa). Cu cation is bound by residues His463, His466, His468, His533, Cys534, His535, and His539.

It belongs to the multicopper oxidase family. Cu cation serves as cofactor.

It is found in the secreted. The enzyme catalyses 4 hydroquinone + O2 = 4 benzosemiquinone + 2 H2O. In terms of biological role, lignin degradation and detoxification of lignin-derived products. The protein is Laccase (LAC-1) of Cryphonectria parasitica (Chestnut blight fungus).